The following is a 267-amino-acid chain: L-aspartate dehydrogenase (267 aa).

NAD(+) contacts are provided by alanine 124 and asparagine 190. Histidine 220 is a catalytic residue.

This sequence belongs to the L-aspartate dehydrogenase family.

The catalysed reaction is L-aspartate + NADP(+) + H2O = oxaloacetate + NH4(+) + NADPH + H(+). It catalyses the reaction L-aspartate + NAD(+) + H2O = oxaloacetate + NH4(+) + NADH + H(+). Its pathway is cofactor biosynthesis; NAD(+) biosynthesis; iminoaspartate from L-aspartate (dehydrogenase route): step 1/1. Its function is as follows. Specifically catalyzes the NAD or NADP-dependent dehydrogenation of L-aspartate to iminoaspartate. This chain is L-aspartate dehydrogenase, found in Polaromonas sp. (strain JS666 / ATCC BAA-500).